Here is a 155-residue protein sequence, read N- to C-terminus: UPF0178 protein Clos_2709 (155 aa).

It belongs to the UPF0178 family.

This Alkaliphilus oremlandii (strain OhILAs) (Clostridium oremlandii (strain OhILAs)) protein is UPF0178 protein Clos_2709.